Consider the following 1129-residue polypeptide: Protein DWARF 53-LIKE (1129 aa).

In terms of domain architecture, Clp R spans 8-180 (ARQCLSPAAV…KLAILRPAPP (173 aa)). 2 repeat regions span residues 12–85 (LSPA…LDRL) and 102–180 (VSNS…PAPP). The disordered stretch occupies residues 519-573 (RYIGVPADKERSANPSKGSESIGVQKDVIKPCAVSAVHSSSTARPISSPSVTNKR). The span at 557 to 568 (SSSTARPISSPS) shows a compositional bias: low complexity. The EAR 1 motif lies at 577-581 (LVLNL). The disordered stretch occupies residues 587–654 (KSDENLQERG…KRVEDSERSV (68 aa)). Polar residues predominate over residues 596-608 (GMQSQHGTLSNAD). A compositionally biased stretch (basic and acidic residues) spans 645-654 (KRVEDSERSV). 2 short sequence motifs (EAR) span residues 798 to 802 (LDLNL) and 975 to 980 (FDLNLP). The tract at residues 975–1001 (FDLNLPVDEDEPFDADDDSSSHENSYG) is disordered. Positions 981-992 (VDEDEPFDADDD) are enriched in acidic residues.

This sequence belongs to the ClpA/ClpB family. Post-translationally, polyubiquitinated. Strigolactone, but not karrikin, triggers rapid SCF(D3)-dependent degradation via the proteasome.

In terms of biological role, repressor of strigolactones (SL) signaling. Subjected to a negative feedback control of SL signaling. This chain is Protein DWARF 53-LIKE, found in Oryza sativa subsp. japonica (Rice).